Consider the following 100-residue polypeptide: Large ribosomal subunit protein uL23 (100 aa).

Belongs to the universal ribosomal protein uL23 family. As to quaternary structure, part of the 50S ribosomal subunit. Contacts protein L29, and trigger factor when it is bound to the ribosome.

Functionally, one of the early assembly proteins it binds 23S rRNA. One of the proteins that surrounds the polypeptide exit tunnel on the outside of the ribosome. Forms the main docking site for trigger factor binding to the ribosome. This chain is Large ribosomal subunit protein uL23, found in Shewanella amazonensis (strain ATCC BAA-1098 / SB2B).